The primary structure comprises 146 residues: Microsomal glutathione S-transferase 2 (146 aa).

A run of 3 helical transmembrane segments spans residues 6–26 (ILLAALSVLSACQQSYFAMQV), 59–79 (FYPIFIITLWMAGWYFNQVFA), and 111–131 (SLGVLALLTVLGAVGILNSFL).

It belongs to the MAPEG family. As to quaternary structure, homotrimer.

The protein localises to the endoplasmic reticulum membrane. The protein resides in the microsome membrane. The enzyme catalyses RX + glutathione = an S-substituted glutathione + a halide anion + H(+). It carries out the reaction 1-chloro-2,4-dinitrobenzene + glutathione = 2,4-dinitrophenyl-S-glutathione + chloride + H(+). The catalysed reaction is leukotriene C4 = leukotriene A4 + glutathione. It catalyses the reaction (5S)-hydroperoxy-(6E,8Z,11Z,14Z)-eicosatetraenoate + 2 glutathione = (5S)-hydroxy-(6E,8Z,11Z,14Z)-eicosatetraenoate + glutathione disulfide + H2O. Its activity is regulated as follows. Each monomer binds on GSH molecule but only one subunit is catalytically active. In terms of biological role, catalyzes several different glutathione-dependent reactions. Catalyzes the glutathione-dependent reduction of lipid hydroperoxides, such as 5-HPETE. Has glutathione transferase activity, toward xenobiotic electrophiles, such as 1-chloro-2, 4-dinitrobenzene (CDNB). Also catalyzes the conjugation of leukotriene A4 with reduced glutathione to form leukotriene C4 (LTC4). Involved in oxidative DNA damage induced by ER stress and anticancer agents by activating LTC4 biosynthetic machinery in nonimmune cells. This chain is Microsomal glutathione S-transferase 2 (MGST2), found in Bos taurus (Bovine).